We begin with the raw amino-acid sequence, 213 residues long: Small ribosomal subunit protein uS5 (213 aa).

Residues 49–112 enclose the S5 DRBM domain; the sequence is LEEEVMDVNL…DNAKYNLIKV (64 aa).

This sequence belongs to the universal ribosomal protein uS5 family. In terms of assembly, part of the 30S ribosomal subunit. Contacts protein S4.

Its function is as follows. With S4 and S12 plays an important role in translational accuracy. This Methanobrevibacter smithii (strain ATCC 35061 / DSM 861 / OCM 144 / PS) protein is Small ribosomal subunit protein uS5.